Reading from the N-terminus, the 49-residue chain is GVSCLCDSDGPSVRGNTLSGTLWLYPSGCPSGWHNCKAHGPTIGWCCKQ.

Cystine bridges form between C4/C46, C6/C36, and C29/C47.

The protein belongs to the sea anemone sodium channel inhibitory toxin family. Type I subfamily.

Its subcellular location is the secreted. The protein resides in the nematocyst. In terms of biological role, binds specifically to voltage-gated sodium channels (Nav) (site 3), thereby delaying their inactivation. This toxin retains the greatest capacity to discriminate between the cardiac (Nav1.5/SCN5A) and neuronal sodium channels (2.5 nM versus 120 nM, when electrophysiologically tested and 14 nM versus 400 nM, when tested by ion flux), whereas its paralog Anthopleurin-B has the highest affinity of all anemone toxins for the mammalian sodium channel. Its ability to differentiate between cardiac and skeletal channels appears to be associated with domain 4 of the channel. This toxin does not slow or inhibit closed-state inactivation of cardiac sodium channels, but selectively modifies inactivation from the open-state. It does not display phospholipid-binding activities, suggesting that the domain IV S3-S4 linker is located at the extracellular surface and not buried in the phospholipid bilayer. This chain is Delta-actitoxin-Axm1a, found in Anthopleura xanthogrammica (Giant green sea anemone).